Reading from the N-terminus, the 209-residue chain is Imidazoleglycerol-phosphate dehydratase (209 aa).

The protein belongs to the imidazoleglycerol-phosphate dehydratase family.

The protein localises to the cytoplasm. It catalyses the reaction D-erythro-1-(imidazol-4-yl)glycerol 3-phosphate = 3-(imidazol-4-yl)-2-oxopropyl phosphate + H2O. It participates in amino-acid biosynthesis; L-histidine biosynthesis; L-histidine from 5-phospho-alpha-D-ribose 1-diphosphate: step 6/9. This chain is Imidazoleglycerol-phosphate dehydratase, found in Nostoc sp. (strain PCC 7120 / SAG 25.82 / UTEX 2576).